Consider the following 301-residue polypeptide: MSASIADNVAEAQLQAEVLTKALPHMQRYDDAIVVVKYGGHAMGNDELARHFAQDIVLLEQSGVNPVVVHGGGPQIGAMLEKLGIKSEFAAGLRITDKATIEIVEMVLAGSINKQIVGFINEAGGKAIGLCGKDGNMVRARKATRTIVDPQSHIEEVVDLGFVGEPDTVDTMVLDQILGRELIPVLAPVASAVDGGTYNVNADTFAGAIAGALGAKRLLLLTDVPGVLDKNKQLIPRLTIDECRALIADGTVSGGMIPKVETCIYALEKGVEGVVIMDGKLPHSVLLELLTDHGIGTLITR.

Substrate is bound by residues 72–73 (GG), Arg94, and Asn199.

This sequence belongs to the acetylglutamate kinase family. ArgB subfamily.

It localises to the cytoplasm. It catalyses the reaction N-acetyl-L-glutamate + ATP = N-acetyl-L-glutamyl 5-phosphate + ADP. It functions in the pathway amino-acid biosynthesis; L-arginine biosynthesis; N(2)-acetyl-L-ornithine from L-glutamate: step 2/4. Its function is as follows. Catalyzes the ATP-dependent phosphorylation of N-acetyl-L-glutamate. The protein is Acetylglutamate kinase of Azorhizobium caulinodans (strain ATCC 43989 / DSM 5975 / JCM 20966 / LMG 6465 / NBRC 14845 / NCIMB 13405 / ORS 571).